The primary structure comprises 191 residues: Fe/S biogenesis protein NfuA (191 aa).

[4Fe-4S] cluster is bound by residues cysteine 149 and cysteine 152.

This sequence belongs to the NfuA family. Homodimer. [4Fe-4S] cluster is required as a cofactor.

Functionally, involved in iron-sulfur cluster biogenesis. Binds a 4Fe-4S cluster, can transfer this cluster to apoproteins, and thereby intervenes in the maturation of Fe/S proteins. Could also act as a scaffold/chaperone for damaged Fe/S proteins. The protein is Fe/S biogenesis protein NfuA of Erwinia tasmaniensis (strain DSM 17950 / CFBP 7177 / CIP 109463 / NCPPB 4357 / Et1/99).